A 128-amino-acid chain; its full sequence is Glycine cleavage system H protein (128 aa).

One can recognise a Lipoyl-binding domain in the interval 22–104 (AIVVGITDFA…YEEGWMITIE (83 aa)). K63 is subject to N6-lipoyllysine.

Belongs to the GcvH family. The glycine cleavage system is composed of four proteins: P, T, L and H. (R)-lipoate serves as cofactor.

In terms of biological role, the glycine cleavage system catalyzes the degradation of glycine. The H protein shuttles the methylamine group of glycine from the P protein to the T protein. In Anaeromyxobacter dehalogenans (strain 2CP-1 / ATCC BAA-258), this protein is Glycine cleavage system H protein.